Here is a 156-residue protein sequence, read N- to C-terminus: Insulin (156 aa).

The signal sequence occupies residues 1–31; the sequence is MSKFLLQSHSANACLLTLLLTLASNLDISLA. 4 cysteine pairs are disulfide-bonded: Cys37–Cys114, Cys49–Cys119, Cys61–Cys128, and Cys112–Cys115. Positions 79 to 93 are cleaved as a propeptide — c peptide beta; it reads DTENVNDKLRGILLN. Residues 96–102 constitute a propeptide, c peptide alpha; that stretch reads EAFSYLT. A propeptide spans 141–156 (d peptide); that stretch reads TGRSNSGHAQLEDNFS. Residues 144 to 156 constitute a propeptide, d peptide short form; it reads SNSGHAQLEDNFS. Glu152 is subject to 4-carboxyglutamate.

It belongs to the insulin family. Heterodimer of a B chain or a B chain' and an A chain probably linked by three disulfide bonds. Expressed in the central region of the cerebral ganglia mostly within the F and C clusters.

Its subcellular location is the secreted. Functionally, involved in glucose metabolism. In Aplysia californica (California sea hare), this protein is Insulin (PIN).